The following is a 35-amino-acid chain: Jingzhaotoxin F6-27.63 (35 aa).

Intrachain disulfides connect cysteine 2-cysteine 17, cysteine 9-cysteine 22, and cysteine 16-cysteine 29.

It belongs to the neurotoxin 10 (Hwtx-1) family. 49 (Jztx-F6) subfamily. In terms of tissue distribution, expressed by the venom gland.

Its subcellular location is the secreted. Probable ion channel inhibitor. The sequence is that of Jingzhaotoxin F6-27.63 from Chilobrachys guangxiensis (Chinese earth tiger tarantula).